The sequence spans 454 residues: NADP-specific glutamate dehydrogenase (454 aa).

Ser-2 carries the N-acetylserine modification. Lys-114 is a catalytic residue.

Belongs to the Glu/Leu/Phe/Val dehydrogenases family. Homohexamer.

It catalyses the reaction L-glutamate + NADP(+) + H2O = 2-oxoglutarate + NH4(+) + NADPH + H(+). This Neurospora intermedia protein is NADP-specific glutamate dehydrogenase (GDH).